The chain runs to 629 residues: DNA ligase B (629 aa).

Residue Lys151 is the N6-AMP-lysine intermediate of the active site. Residues 588 to 597 are compositionally biased toward polar residues; sequence LQKQHGTNTR. The segment at 588–629 is disordered; sequence LQKQHGTNTRNEQKGDVRRVDVKQDNGTTWLPEQDSNLRPND. Basic and acidic residues predominate over residues 598–611; it reads NEQKGDVRRVDVKQ. A compositionally biased stretch (polar residues) spans 612-629; the sequence is DNGTTWLPEQDSNLRPND.

The protein belongs to the NAD-dependent DNA ligase family. LigB subfamily.

It carries out the reaction NAD(+) + (deoxyribonucleotide)n-3'-hydroxyl + 5'-phospho-(deoxyribonucleotide)m = (deoxyribonucleotide)n+m + AMP + beta-nicotinamide D-nucleotide.. Functionally, catalyzes the formation of phosphodiester linkages between 5'-phosphoryl and 3'-hydroxyl groups in double-stranded DNA using NAD as a coenzyme and as the energy source for the reaction. The sequence is that of DNA ligase B from Chromohalobacter salexigens (strain ATCC BAA-138 / DSM 3043 / CIP 106854 / NCIMB 13768 / 1H11).